The sequence spans 221 residues: DNA repair and recombination protein RadB (221 aa).

Belongs to the eukaryotic RecA-like protein family. RadB subfamily.

Functionally, involved in DNA repair and in homologous recombination. May regulate the cleavage reactions of the branch-structured DNA. Has a very weak ATPase activity that is not stimulated by DNA. Binds DNA but does not promote DNA strands exchange. The polypeptide is DNA repair and recombination protein RadB (Thermococcus gammatolerans (strain DSM 15229 / JCM 11827 / EJ3)).